The chain runs to 129 residues: Small ribosomal subunit protein bS6 (129 aa).

Belongs to the bacterial ribosomal protein bS6 family.

In terms of biological role, binds together with bS18 to 16S ribosomal RNA. The sequence is that of Small ribosomal subunit protein bS6 from Microcystis aeruginosa (strain NIES-843 / IAM M-2473).